We begin with the raw amino-acid sequence, 385 residues long: GPN-loop GTPase 1 (385 aa).

Residue 13 to 18 coordinates GTP; it reads GSGKTT. The Gly-Pro-Asn (GPN)-loop; involved in dimer interface motif lies at 70–72; the sequence is GPN. Residue 173-176 participates in GTP binding; that stretch reads NKTD. A phosphoserine mark is found at Ser-304, Ser-308, and Ser-313. Acidic residues predominate over residues 317–332; that stretch reads EDANDGLVDRDEDEGV. The tract at residues 317–356 is disordered; sequence EDANDGLVDRDEDEGVEREYTFPGEERTKGEVNENSAPDL. Over residues 333 to 348 the composition is skewed to basic and acidic residues; that stretch reads EREYTFPGEERTKGEV. Phosphoserine is present on Ser-352. Lys-369 is covalently cross-linked (Glycyl lysine isopeptide (Lys-Gly) (interchain with G-Cter in ubiquitin)).

This sequence belongs to the GPN-loop GTPase family. As to quaternary structure, heterodimers with GPN2 or GPN3. Binds to RNA polymerase II (RNAPII) in a GTP-dependent manner. Interacts with nuclear pore protein NUP133 and nuclear export factor CRM1. Interacts with PCL1. Post-translationally, phosphorylated by the cyclin-CDK PCL1-PHO85.

Its subcellular location is the cytoplasm. Functionally, small GTPase required for proper nuclear import of RNA polymerase II (RNAPII). May act at an RNAP assembly step prior to nuclear import. Promotes sister chromatid separation during anaphase. The protein is GPN-loop GTPase 1 of Saccharomyces cerevisiae (strain ATCC 204508 / S288c) (Baker's yeast).